The sequence spans 824 residues: MAIYDFGNIEKKWQERWQENKAFSIIERDRPKYYVLEMFPYPSGKIHMGHVRNYSIGDVVARFKRMKGYNVLHPMGWDSFGLPAENAAIKHGIHPDHWTKENVKEMKEQLDALGLSYDWDREVSTCTPEYYKWTQWLFLQFYHKGLAYKKESQVNWCPSCETVLANEQVVNGGCDRCDSSVGKKNLNQWYFKITDYAEALLEDIKLLDGWPEKVKTMQQNWIGKSHGAEIDFPIENTSKELKVFTTRPDTIYGATYMVLAPEHPYVMELVKETEYEEAVVAFRNKLQHMSDIERTSTEIEKEGIFIGKYCINPVSNEKIPIYIANYVLADYGTGAIMAVPAHDQRDLDFARKYDITVTPVIRPIDESDGFDIEKEAYTDSGIMINSEKFNGLDSEKAYEDIAKHIETLNAGKRTINYRLRDWLLSRQRYWGTPIPIIYCDDCGIVPVREEELPVKLPVDVTFSGKGSSPLETSEGFLNTNCPSCGKMAKRETDTMDTFVDSSWYFLRYTDANNEQLPFSKEAANYWVPVDQYIGGVEHAILHLLYSRFFTKVMKDLGLTDQPEPFKKLLTQGMVLKDGAKMSKSKGNVVSPEEIIQKYGADTARLFVLFAAPPERDLEWSDQGVEGSYRFLNRVWRLAEEFIDNNLFMSTSLGEALTKRDKDLKYTIHYTIKKVTSDVEDRFNFNTAISAVMELINELYKYKETDPSKLNGDLFREGIETSILLLAPFAPHFTEELWEKLGKAESVHMTNWPEYDHEAIIKDEVEIVMQVNGKVKDRMMVPTNVSKEELESLAMKNEKIIQIIEGKQIIKIIAVPKKLVNIVIK.

Residues Pro40–His50 carry the 'HIGH' region motif. The 'KMSKS' region motif lies at Lys580–Ser584. Residue Lys583 participates in ATP binding.

Belongs to the class-I aminoacyl-tRNA synthetase family.

The protein localises to the cytoplasm. The catalysed reaction is tRNA(Leu) + L-leucine + ATP = L-leucyl-tRNA(Leu) + AMP + diphosphate. The protein is Leucine--tRNA ligase of Alkaliphilus metalliredigens (strain QYMF).